Here is a 407-residue protein sequence, read N- to C-terminus: Methylenetetrahydrofolate--tRNA-(uracil-5-)-methyltransferase TrmFO (407 aa).

An FAD-binding site is contributed by 9–14 (GAGLAG).

Belongs to the MnmG family. TrmFO subfamily. It depends on FAD as a cofactor.

Its subcellular location is the cytoplasm. It carries out the reaction uridine(54) in tRNA + (6R)-5,10-methylene-5,6,7,8-tetrahydrofolate + NADH + H(+) = 5-methyluridine(54) in tRNA + (6S)-5,6,7,8-tetrahydrofolate + NAD(+). The enzyme catalyses uridine(54) in tRNA + (6R)-5,10-methylene-5,6,7,8-tetrahydrofolate + NADPH + H(+) = 5-methyluridine(54) in tRNA + (6S)-5,6,7,8-tetrahydrofolate + NADP(+). Functionally, catalyzes the folate-dependent formation of 5-methyl-uridine at position 54 (M-5-U54) in all tRNAs. This Lactobacillus helveticus (strain DPC 4571) protein is Methylenetetrahydrofolate--tRNA-(uracil-5-)-methyltransferase TrmFO.